Reading from the N-terminus, the 167-residue chain is MNQSYFNLLGNITWLWMNSSLHKEWSCELLARNVIPAIENEQYMLLIDNGIPIAYCSWADLNLETEVKYIKDINSLTPEEWQSGDRRWIIDWVAPFGHSQLLYKKMCQKYPDMIVRSIRFYPKQKELGKIAYFKGGKLDKKTAKKRFDTYQEELATALKNEFNFIKK.

Residues H22 and D91 contribute to the active site.

The protein belongs to the RTX toxin acyltransferase family.

It localises to the cytoplasm. It carries out the reaction a fatty acyl-[ACP] + L-lysyl-[protein] = N(6)-(fatty acyl)-L-lysyl-[protein] + holo-[ACP] + H(+). Involved in fatty acylation of the protoxin (LktA) at two internal lysine residues, thereby converting it to the active toxin. The chain is Leukotoxin-activating lysine-acyltransferase LktC serotype A1 (lktC) from Mannheimia haemolytica (Pasteurella haemolytica).